We begin with the raw amino-acid sequence, 570 residues long: Sulfite reductase [NADPH] hemoprotein beta-component (570 aa).

[4Fe-4S] cluster-binding residues include Cys-434, Cys-440, Cys-479, and Cys-483. A siroheme-binding site is contributed by Cys-483.

This sequence belongs to the nitrite and sulfite reductase 4Fe-4S domain family. In terms of assembly, alpha(8)-beta(8). The alpha component is a flavoprotein, the beta component is a hemoprotein. Requires siroheme as cofactor. The cofactor is [4Fe-4S] cluster.

It catalyses the reaction hydrogen sulfide + 3 NADP(+) + 3 H2O = sulfite + 3 NADPH + 4 H(+). The protein operates within sulfur metabolism; hydrogen sulfide biosynthesis; hydrogen sulfide from sulfite (NADPH route): step 1/1. Its function is as follows. Component of the sulfite reductase complex that catalyzes the 6-electron reduction of sulfite to sulfide. This is one of several activities required for the biosynthesis of L-cysteine from sulfate. The sequence is that of Sulfite reductase [NADPH] hemoprotein beta-component from Escherichia coli (strain SMS-3-5 / SECEC).